A 152-amino-acid chain; its full sequence is Heavy metal-associated isoprenylated plant protein 22 (152 aa).

Residues 28–91 (MQTVNIKVKI…TVQSTGKKKA (64 aa)) enclose the HMA domain. Residues Cys39 and Cys42 each coordinate a metal cation. The interval 123 to 152 (SEQAQAQPGSTDDKLMSLFSDENPNACTVM) is disordered. Over residues 142–152 (SDENPNACTVM) the composition is skewed to polar residues. Cys149 carries the post-translational modification Cysteine methyl ester. A lipid anchor (S-farnesyl cysteine) is attached at Cys149. A propeptide spans 150 to 152 (TVM) (removed in mature form).

This sequence belongs to the HIPP family. In terms of assembly, interacts with ZHD11/HB29. As to expression, expressed in lateral roots and mature anthers.

The protein resides in the membrane. Its function is as follows. Heavy-metal-binding protein. Binds cadmium. May be involved in cadmium transport and play a role in cadmium detoxification. The polypeptide is Heavy metal-associated isoprenylated plant protein 22 (Arabidopsis thaliana (Mouse-ear cress)).